Reading from the N-terminus, the 152-residue chain is Transcriptional repressor NrdR (152 aa).

A zinc finger spans residues 3–34 (CPSCQHNGTRVLDSRPVDDGKSIRRRRECESC). The ATP-cone domain maps to 49-139 (LIVVKKEGVR…VYRQFKDINV (91 aa)).

Belongs to the NrdR family. It depends on Zn(2+) as a cofactor.

Functionally, negatively regulates transcription of bacterial ribonucleotide reductase nrd genes and operons by binding to NrdR-boxes. This Bacillus subtilis (strain 168) protein is Transcriptional repressor NrdR.